Here is a 90-residue protein sequence, read N- to C-terminus: Probable Fe(2+)-trafficking protein (90 aa).

Belongs to the Fe(2+)-trafficking protein family.

Could be a mediator in iron transactions between iron acquisition and iron-requiring processes, such as synthesis and/or repair of Fe-S clusters in biosynthetic enzymes. This Colwellia psychrerythraea (strain 34H / ATCC BAA-681) (Vibrio psychroerythus) protein is Probable Fe(2+)-trafficking protein.